The chain runs to 490 residues: UDP-N-acetylmuramoyl-L-alanyl-D-glutamate--2,6-diaminopimelate ligase (490 aa).

Ser-31 serves as a coordination point for UDP-N-acetyl-alpha-D-muramoyl-L-alanyl-D-glutamate. Residue 109-115 (GTNGKTS) participates in ATP binding. UDP-N-acetyl-alpha-D-muramoyl-L-alanyl-D-glutamate contacts are provided by residues Asn-150, 151–152 (TT), Ser-178, and Arg-186. Lys-218 carries the N6-carboxylysine modification. Residues Arg-384, 408 to 411 (DNPR), Gly-458, and Glu-462 contribute to the meso-2,6-diaminopimelate site. The Meso-diaminopimelate recognition motif signature appears at 408–411 (DNPR).

This sequence belongs to the MurCDEF family. MurE subfamily. Mg(2+) is required as a cofactor. In terms of processing, carboxylation is probably crucial for Mg(2+) binding and, consequently, for the gamma-phosphate positioning of ATP.

Its subcellular location is the cytoplasm. The enzyme catalyses UDP-N-acetyl-alpha-D-muramoyl-L-alanyl-D-glutamate + meso-2,6-diaminopimelate + ATP = UDP-N-acetyl-alpha-D-muramoyl-L-alanyl-gamma-D-glutamyl-meso-2,6-diaminopimelate + ADP + phosphate + H(+). The protein operates within cell wall biogenesis; peptidoglycan biosynthesis. In terms of biological role, catalyzes the addition of meso-diaminopimelic acid to the nucleotide precursor UDP-N-acetylmuramoyl-L-alanyl-D-glutamate (UMAG) in the biosynthesis of bacterial cell-wall peptidoglycan. This Bacillus velezensis (strain DSM 23117 / BGSC 10A6 / LMG 26770 / FZB42) (Bacillus amyloliquefaciens subsp. plantarum) protein is UDP-N-acetylmuramoyl-L-alanyl-D-glutamate--2,6-diaminopimelate ligase.